A 493-amino-acid polypeptide reads, in one-letter code: MVKSCQKKPDIDEFFSFLQSAFHPLQTEELDTFVRNIFEYDDRGRLYNCLLTLVPYERLPIDAEDLSSRKTYARPVLIRQYRSLRFANKEENICRLTPNSAFVPVRDSAVASISTSKVQDFNSYATLTEAQKKTATPVEEKNFLNQIVIQCLDSLETDVETNTTHATLLAVDPTWLIRVSQHTCDRKAVANLCIQYGSQIFYDPSFRNAYELWSNPSVLLAFLKAQRVLVVSDIFTSSTLRSTQGTPMSFPNLALESADNVENVSKPINPRMERFSSEVKSSSILKQQIAAVVEKINYDIRPQRDQIPEENIVPRISYLTSTTTSTKSSPVPESTTTNTTEVLKELNDIQENKSRKNVEKATAATEEMLRGHHKPVEGTTATSEKESIKEEVDLEVNGDGKVEAEERIELESSDSEKELSELIDFLKREHPPEDTPEKRVKIKRIRTLLDTWQQEWRILNKAISNAESNSGRGQNSKTKTTSVNLSRNKRTRT.

At Ser328 the chain carries Phosphoserine. Over residues 466–486 (AESNSGRGQNSKTKTTSVNLS) the composition is skewed to polar residues. Residues 466–493 (AESNSGRGQNSKTKTTSVNLSRNKRTRT) are disordered.

This is an uncharacterized protein from Schizosaccharomyces pombe (strain 972 / ATCC 24843) (Fission yeast).